A 503-amino-acid chain; its full sequence is Protein FAM124A (503 aa).

A disordered region spans residues 434-470; the sequence is LAQSDTVPGRQNHSSDSLHSVSDISSSPCPVFPSTPA. The span at 436 to 445 shows a compositional bias: polar residues; the sequence is QSDTVPGRQN. A compositionally biased stretch (low complexity) spans 447–460; that stretch reads SSDSLHSVSDISSS.

The protein belongs to the FAM124 family.

The sequence is that of Protein FAM124A (fam124a) from Xenopus tropicalis (Western clawed frog).